Here is a 228-residue protein sequence, read N- to C-terminus: Uracil-DNA glycosylase (228 aa).

Residue Asp-64 is the Proton acceptor of the active site.

This sequence belongs to the uracil-DNA glycosylase (UDG) superfamily. UNG family.

Its subcellular location is the cytoplasm. The enzyme catalyses Hydrolyzes single-stranded DNA or mismatched double-stranded DNA and polynucleotides, releasing free uracil.. Excises uracil residues from the DNA which can arise as a result of misincorporation of dUMP residues by DNA polymerase or due to deamination of cytosine. This is Uracil-DNA glycosylase from Pectobacterium atrosepticum (strain SCRI 1043 / ATCC BAA-672) (Erwinia carotovora subsp. atroseptica).